Reading from the N-terminus, the 354-residue chain is Rhodopsin (354 aa).

Residues 1-36 lie on the Extracellular side of the membrane; it reads MNGTEGPYFYVPMVNTTGIVRSPYEYPQYYLVSPAA. Residues Asn-2 and Asn-15 are each glycosylated (N-linked (GlcNAc...) asparagine). A helical transmembrane segment spans residues 37 to 61; that stretch reads YACLGAYMFFLILVGFPINFLTLYV. The Cytoplasmic portion of the chain corresponds to 62-73; the sequence is TIEHKKLRTPLN. Residues 74–96 traverse the membrane as a helical segment; it reads YILLNLAVADLFMVFGGFTTTIY. The Extracellular portion of the chain corresponds to 97–110; the sequence is TSMHGYFVLGRLGC. Cysteines 110 and 187 form a disulfide. The chain crosses the membrane as a helical span at residues 111-133; the sequence is NLEGYFATLGGEIGLWSLVVLAV. The 'Ionic lock' involved in activated form stabilization motif lies at 134-136; that stretch reads ERW. Residues 134 to 152 are Cytoplasmic-facing; it reads ERWLVVCKPISNFRFSENH. The helical transmembrane segment at 153-173 threads the bilayer; it reads AIMGLVFTWIMANSCAAPPLL. Topologically, residues 174 to 202 are extracellular; it reads GWSRYIPEGMQCSCGVDYYTRAEGFNNES. The helical transmembrane segment at 203 to 224 threads the bilayer; it reads FVIYMFICHFCIPLIVVFFCYG. Topologically, residues 225–252 are cytoplasmic; it reads RLLCAVKEAAAAQQESETTQRAEREVTR. A helical transmembrane segment spans residues 253–274; it reads MVVIMVIGFLVCWIPYASVAWY. Residues 275–286 are Extracellular-facing; sequence IFTHQGSEFGPL. The chain crosses the membrane as a helical span at residues 287-308; it reads FMTVPAFFAKSASIYNPLIYIC. Lys-296 is modified (N6-(retinylidene)lysine). Residues 309-354 lie on the Cytoplasmic side of the membrane; that stretch reads MNKQFRHCMITTLCCGKNPFEEEEGASTTASKTEASSVSSSSVSPA. 2 S-palmitoyl cysteine lipidation sites follow: Cys-322 and Cys-323. The segment at 333–354 is disordered; the sequence is GASTTASKTEASSVSSSSVSPA. The span at 334 to 354 shows a compositional bias: low complexity; the sequence is ASTTASKTEASSVSSSSVSPA.

Belongs to the G-protein coupled receptor 1 family. Opsin subfamily. In terms of processing, phosphorylated on some or all of the serine and threonine residues present in the C-terminal region. Post-translationally, contains one covalently linked retinal chromophore.

The protein localises to the membrane. The protein resides in the cell projection. It is found in the cilium. It localises to the photoreceptor outer segment. In terms of biological role, photoreceptor required for image-forming vision at low light intensity. While most salt water fish species use retinal as chromophore, most freshwater fish use 3-dehydroretinal, or a mixture of retinal and 3-dehydroretinal. Light-induced isomerization of 11-cis to all-trans retinal triggers a conformational change that activates signaling via G-proteins. Subsequent receptor phosphorylation mediates displacement of the bound G-protein alpha subunit by arrestin and terminates signaling. In Poecilia reticulata (Guppy), this protein is Rhodopsin (rho).